A 590-amino-acid chain; its full sequence is Muscarinic acetylcholine receptor M3 (590 aa).

At 1–67 (MTLHNNSTTS…DPLGGHTVWQ (67 aa)) the chain is on the extracellular side. 5 N-linked (GlcNAc...) asparagine glycosylation sites follow: Asn5, Asn6, Asn15, Asn41, and Asn48. Residues 68-91 (VVFIAFLTGILALVTIIGNILVIV) form a helical membrane-spanning segment. Topologically, residues 92 to 104 (SFKVNKQLKTVNN) are cytoplasmic. Residues 105–130 (YFLLSLACADLIIGVISMNLFTTYII) traverse the membrane as a helical segment. Residues 131–142 (MNRWALGNLACD) lie on the Extracellular side of the membrane. An intrachain disulfide couples Cys141 to Cys221. A helical membrane pass occupies residues 143–164 (LWLAIDYVASNASVMNLLVISF). Residues 165–184 (DRYFSITRPLTYRAKRTTKR) lie on the Cytoplasmic side of the membrane. Residues 185–206 (AGVMIGLAWVISFVLWAPAILF) form a helical membrane-spanning segment. The Extracellular segment spans residues 207–229 (WQYFVGKRTVPPGECFIQFLSEP). Residues 230-252 (TITFGTAIAAFYMPVTIMTILYW) form a helical membrane-spanning segment. The Cytoplasmic portion of the chain corresponds to 253–491 (RIYKETEKRT…SLVKEKKAAQ (239 aa)). Positions 275-281 (AETENFV) match the Basolateral sorting signal motif. Positions 323 to 357 (SSEQMDQDHSSSDSWNNNDAAASLENSASSDEEDI) are disordered. The span at 334 to 345 (SDSWNNNDAAAS) shows a compositional bias: low complexity. Ser385 bears the Phosphoserine mark. Residues 492 to 514 (TLSAILLAFIITWTPYNIMVLVN) traverse the membrane as a helical segment. Residues 515-526 (TFCDSCIPKTFW) lie on the Extracellular side of the membrane. A disulfide bond links Cys517 and Cys520. Residues 527–546 (NLGYWLCYINSTVNPVCYAL) form a helical membrane-spanning segment. The Cytoplasmic segment spans residues 547 to 590 (CNKTFRTTFKMLLLCQCGKKKRRKQQYQQRQSVIFHKRAPEQAL).

Belongs to the G-protein coupled receptor 1 family. Muscarinic acetylcholine receptor subfamily. CHRM3 sub-subfamily. As to quaternary structure, homodimer; the dimers can form tetramers. Interacts with NALCN. Interacts with TMEM147.

The protein resides in the cell membrane. The protein localises to the postsynaptic cell membrane. Its subcellular location is the basolateral cell membrane. It localises to the endoplasmic reticulum membrane. Functionally, the muscarinic acetylcholine receptor mediates various cellular responses, including inhibition of adenylate cyclase, breakdown of phosphoinositides and modulation of potassium channels through the action of G proteins. Primary transducing effect is Pi turnover. The polypeptide is Muscarinic acetylcholine receptor M3 (CHRM3) (Gorilla gorilla gorilla (Western lowland gorilla)).